A 2007-amino-acid chain; its full sequence is Structural maintenance of chromosomes flexible hinge domain-containing protein 1 (2007 aa).

Ala2 is modified (N-acetylalanine). Positions 111-702 (TKERIDFLPH…LSVTWPEGDE (592 aa)) are ATPase activity domain. Phosphoserine is present on Ser833. Lys1350 is modified (N6-acetyllysine). Residue Lys1375 forms a Glycyl lysine isopeptide (Lys-Gly) (interchain with G-Cter in SUMO2) linkage. Thr1500 carries the phosphothreonine modification. The 128-residue stretch at 1721-1848 (GDILGKIAHL…DNLDAANHYR (128 aa)) folds into the SMC hinge domain. Lys1803 is modified (N6-succinyllysine). Position 1975 is a phosphoserine (Ser1975). The interval 1984 to 2007 (PIPTKRMRRESTRQNRRPKGDVPN) is disordered.

It belongs to the SMC family. Highly divergent. As to quaternary structure, homodimer; homodimerizes via its SMC hinge domain. Interacts with LRIF1. In terms of processing, sumoylated with SUMO1. During embryogenesis, specifically expressed in immature olfactory sensory neurons.

Its subcellular location is the chromosome. It carries out the reaction ATP + H2O = ADP + phosphate + H(+). In terms of biological role, non-canonical member of the structural maintenance of chromosomes (SMC) protein family that plays a key role in epigenetic silencing by regulating chromatin architecture. Promotes heterochromatin formation in both autosomes and chromosome X, probably by mediating the merge of chromatin compartments. Plays a key role in chromosome X inactivation in females by promoting the spreading of heterochromatin. Recruited to inactivated chromosome X by Xist RNA and acts by mediating the merge of chromatin compartments: promotes random chromatin interactions that span the boundaries of existing structures, leading to create a compartment-less architecture typical of inactivated chromosome X. Required to facilitate Xist RNA spreading. Also required for silencing of a subset of clustered autosomal loci in somatic cells, such as the DUX4 locus. Has ATPase activity; may participate in structural manipulation of chromatin in an ATP-dependent manner as part of its role in gene expression regulation. Also plays a role in DNA repair: localizes to sites of DNA double-strand breaks in response to DNA damage to promote the repair of DNA double-strand breaks. Acts by promoting non-homologous end joining (NHEJ) and inhibiting homologous recombination (HR) repair. Required during preimplantation development, probably acts by regulating chromatin architecture. This Mus musculus (Mouse) protein is Structural maintenance of chromosomes flexible hinge domain-containing protein 1.